The following is a 515-amino-acid chain: MSSIIFIPNDADNINSIMVTISSSLSLVGCLFILSIYIYYKELREFQLKLIFIMTINDFIISIIFLIATHIQTKYFDAITNVFPFFCNFPDSLLHYFFLSSFFWEVCIAHTLIQVIKYNNDKVEDNLKKYFIFSNGLSALIMVSLFFIRSYSKIDCHHDSIFPHLLFFIPLLLTWIYNIIVCALLTKTFKEQAMNFGYSLGINGGSGSYINFTNNNSIDNYSNIIIKNDLIINNNNNINVNNNNNNINILFHVNVNNNNNKIIIKRIRKTPNIIWTSIFFLFSFGFIWSWSILVIILKYLSLDVKYILMISYFFIPLHGCMNAVCFGVNDRLRMNLKKSCKNYYYKFLGLFSLDKRKSYGINGNNKNNKNNNGANCEERSLIDYSPDDDDDEDDDNNNNNYSDGNYYQIPSPFLIDSRNSSNLTDYSVILDNNNNNNNNGPYNPTRSNSITELLYNNINSLNAIRILSNNNNNNNNNNNNNNNNNNNNNNINNNDNNNNNNNNNSFCTIDEDETK.

Residues 1 to 16 (MSSIIFIPNDADNINS) lie on the Extracellular side of the membrane. Residues 17–37 (IMVTISSSLSLVGCLFILSIY) traverse the membrane as a helical segment. The Cytoplasmic portion of the chain corresponds to 38–50 (IYYKELREFQLKL). Residues 51-71 (IFIMTINDFIISIIFLIATHI) form a helical membrane-spanning segment. At 72-92 (QTKYFDAITNVFPFFCNFPDS) the chain is on the extracellular side. Residues 93 to 113 (LLHYFFLSSFFWEVCIAHTLI) traverse the membrane as a helical segment. Topologically, residues 114-129 (QVIKYNNDKVEDNLKK) are cytoplasmic. The helical transmembrane segment at 130 to 150 (YFIFSNGLSALIMVSLFFIRS) threads the bilayer. Residues 151 to 164 (YSKIDCHHDSIFPH) are Extracellular-facing. A helical transmembrane segment spans residues 165–185 (LLFFIPLLLTWIYNIIVCALL). The Cytoplasmic segment spans residues 186–276 (TKTFKEQAMN…IRKTPNIIWT (91 aa)). The chain crosses the membrane as a helical span at residues 277–297 (SIFFLFSFGFIWSWSILVIIL). Residues 298–306 (KYLSLDVKY) are Extracellular-facing. The helical transmembrane segment at 307–327 (ILMISYFFIPLHGCMNAVCFG) threads the bilayer. At 328–515 (VNDRLRMNLK…FCTIDEDETK (188 aa)) the chain is on the cytoplasmic side. The span at 362–375 (NGNNKNNKNNNGAN) shows a compositional bias: low complexity. 2 disordered regions span residues 362–409 (NGNN…YYQI) and 469–515 (NNNN…DETK). The segment covering 385–396 (SPDDDDDEDDDN) has biased composition (acidic residues). Low complexity-rich tracts occupy residues 397–407 (NNNNYSDGNYY) and 469–504 (NNNN…NNNN).

This sequence belongs to the G-protein coupled receptor 5 family.

The protein localises to the membrane. Receptor for cAMP. This chain is Cyclic AMP receptor-like protein G (crlG), found in Dictyostelium discoideum (Social amoeba).